A 268-amino-acid polypeptide reads, in one-letter code: Microtubule-associated protein RP/EB family member 1 (268 aa).

Ala2 carries the N-acetylalanine modification. The 103-residue stretch at 14–116 (NLSRHDMLAW…FVQWFKKFFD (103 aa)) folds into the Calponin-homology (CH) domain. Lys66 is modified (N6-crotonyllysine). Tyr124 carries the phosphotyrosine modification. Residues 124-268 (YDPVAARQGQ…GGPQEEQEEY (145 aa)) are interaction with MTUS2/TIP150. A compositionally biased stretch (low complexity) spans 147-160 (NKPKKPLSSSSAAP). Residues 147 to 184 (NKPKKPLSSSSAAPQRPITTHRTTATPKAGPGVVRKNP) are disordered. Ser155 is modified (phosphoserine). Positions 163–172 (PITTHRTTAT) are enriched in polar residues. The EB1 C-terminal domain maps to 185 to 255 (GVGNGDDEAA…LYATDEGFVI (71 aa)). Residues 185-268 (GVGNGDDEAA…GGPQEEQEEY (84 aa)) are interaction with CDK5RAP2. Residues 206-211 (TVEDLE) form an interaction with APC region. The tract at residues 208 to 268 (EDLEKERDFY…GGPQEEQEEY (61 aa)) is DCTN1-binding. Lys220 carries the post-translational modification N6-acetyllysine. An APC-binding region spans residues 220 to 242 (KLRNIELICQENEGENNPVLQRI). An interaction with SKA1 region spans residues 232–255 (EGENNPVLQRIVDILYATDEGFVI).

It belongs to the MAPRE family. In terms of assembly, homodimer. Heterodimer with MAPRE3. Interacts with DCTN1, DCTN2, TERF1 and dynein intermediate chain. Interaction with DIAPH1 and DIAPH2. Interacts (via C-terminal residues 206-211) with APC (via C-terminal residues 2674-2845); the interaction inhibits association with and bundling of F-actin. Interacts with CLASP2, DST, KIF2C and STIM1; probably required for their targeting to the growing microtubule plus ends. Interacts with MTUS2; interaction is direct and probably targets MTUS2 to microtubules. Interacts (via C-terminus) with SKA1 (via SXIP motif); the interaction is direct and stabilizes the kinetochore-microtubule attachment of the SKA1 complex. Interacts with APC2. Interacts with CLASP1. Interacts with CDK5RAP2. Interacts with MACF1. Interacts with RABL2/RABL2A; binds preferentially to GTP-bound RABL2. Interacts with KCNAB2. Interacts (via C-terminus) with CLIP1. Interacts with SLAIN2 and SLAIN1. Interacts with KIF18B; this interaction is required for efficient accumulation of KIF18B at microtubule plus ends. Interacts with MISP. Interacts with KNSTRN. Interacts with NCKAP5L. Interacts with CAMSAP2. Interacts with PDE4DIP isoform 13/MMG8/SMYLE; this interaction is required for its recruitment to the Golgi apparatus. Forms a pericentrosomal complex with AKAP9, CDK5RAP2 and PDE4DIP isoform 13/MMG8/SMYLE; within this complex, MAPRE1 binding to CDK5RAP2 may be mediated by PDE4DIP. Interacts with AKNA. Interacts with GAS2L1, GAS2L2, and GAS2L3. In terms of processing, acetylation at Lys-220 by KAT2B/PCAF promotes dynamic kinetochore-microtubule interactions in early mitosis. Crotonylated by KAT5 during mitosis, promoting astral microtubule plasticity and dynamic connection between astral microtubules and the cortex during mitotic chromosome segregation, thereby ensuring accurate spindle positioning in mitosis. Decrotonylated by HDAC3.

It localises to the cytoplasm. Its subcellular location is the cytoskeleton. The protein resides in the microtubule organizing center. It is found in the centrosome. The protein localises to the golgi apparatus. It localises to the spindle. Its subcellular location is the spindle pole. In terms of biological role, plus-end tracking protein (+TIP) that binds to the plus-end of microtubules and regulates the dynamics of the microtubule cytoskeleton. Recruits other +TIP proteins to microtubules by binding to a conserved Ser-X-Leu-Pro (SXLP) motif in their polypeptide chains. Promotes cytoplasmic microtubule nucleation and elongation. Involved in mitotic spindle positioning by stabilizing microtubules and promoting dynamic connection between astral microtubules and the cortex during mitotic chromosome segregation. Assists chromosome alignment in metaphase by recruiting the SKA complex to the spindle and stabilizing its interactions with microtubule bundles (K-fibers). Also acts as a regulator of minus-end microtubule organization: interacts with the complex formed by AKAP9 and PDE4DIP, leading to recruit CAMSAP2 to the Golgi apparatus, thereby tethering non-centrosomal minus-end microtubules to the Golgi, an important step for polarized cell movement. Promotes elongation of CAMSAP2-decorated microtubule stretches on the minus-end of microtubules. Acts as a regulator of autophagosome transport via interaction with CAMSAP2. Functions downstream of Rho GTPases and DIAPH1 in stable microtubule formation. May play a role in cell migration. The sequence is that of Microtubule-associated protein RP/EB family member 1 (MAPRE1) from Bos taurus (Bovine).